A 308-amino-acid polypeptide reads, in one-letter code: Secreted frizzled-related protein 1 (308 aa).

A signal peptide spans 1–25 (MGGGRWAAAGALLALAAGLLAAGSA). The FZ domain occupies 47–163 (TKPPQCVDIP…FPEGDVCIAM (117 aa)). 5 disulfide bridges follow: Cys-52-Cys-115, Cys-62-Cys-108, Cys-99-Cys-134, Cys-123-Cys-160, and Cys-127-Cys-151. Residue Asn-167 is glycosylated (N-linked (GlcNAc...) asparagine). 3 disulfides stabilise this stretch: Cys-180/Cys-250, Cys-183/Cys-252, and Cys-197/Cys-300. The region spanning 180-300 (CPPCDNELKS…FMKKMKNHEC (121 aa)) is the NTR domain.

Belongs to the secreted frizzled-related protein (sFRP) family. Interacts with WNT1, WNT2, WNT4, WNT8, MYOC and FRZD6. Highest levels in aortic endothelium, heart, spleen and eye. Lower levels in lung, brain and kidney. Weak expression in liver, skeletal muscle and the medial layer of the aorta. In the cortical brain, localized to neurons and small blood vessels. In the retina, localized to the inner and outer nuclear layers with high expression in the neuronal cell bodies. In the heart, restricted to myocytes. In lung, highest expression found in the epithelium of terminal bronchioles. In kidney, localized to the epithelium of collecting ducts of the medulla and, in spleen, expression restricted to the red pulp in cells associated with the sinuses.

Its subcellular location is the secreted. Soluble frizzled-related proteins (sFRPS) function as modulators of Wnt signaling through direct interaction with Wnts. They have a role in regulating cell growth and differentiation in specific cell types. SFRP1 decreases intracellular beta-catenin levels. Has antiproliferative effects on vascular cells, in vitro and in vivo, and can induce, in vivo, an angiogenic response. In vascular cell cycle, delays the G1 phase and entry into the S phase. In kidney development, inhibits tubule formation and bud growth in metanephroi. Inhibits WNT1/WNT4-mediated TCF-dependent transcription. The protein is Secreted frizzled-related protein 1 (SFRP1) of Bos taurus (Bovine).